A 316-amino-acid chain; its full sequence is Diacylglycerol kinase (316 aa).

The region spanning 1–132 is the DAGKc domain; the sequence is MRKRARIIYN…VDIGKMNNRY (132 aa). Residues 10–14, Thr-41, 67–73, and Thr-94 each bind ATP; these read NPTSG and GDGTLNE. Positions 213, 216, and 218 each coordinate Mg(2+). The Proton acceptor role is filled by Glu-273.

This sequence belongs to the diacylglycerol/lipid kinase family. In terms of assembly, homodimer. Requires Mg(2+) as cofactor.

The catalysed reaction is a 1,2-diacyl-sn-glycerol + ATP = a 1,2-diacyl-sn-glycero-3-phosphate + ADP + H(+). Catalyzes the phosphorylation of diacylglycerol (DAG) into phosphatidic acid. Is a key enzyme involved in the production of lipoteichoic acid by reintroducing DAG formed from the breakdown of membrane phospholipids into the phosphatidylglycerol biosynthetic pathway. The protein is Diacylglycerol kinase (dagK) of Staphylococcus epidermidis (strain ATCC 35984 / DSM 28319 / BCRC 17069 / CCUG 31568 / BM 3577 / RP62A).